The following is a 692-amino-acid chain: Potassium-transporting ATPase ATP-binding subunit (692 aa).

A run of 4 helical transmembrane segments spans residues 50–70, 74–94, 240–260, and 266–286; these read PIMF…FLPS, SIPG…VLFA, LTLI…YLGF, and VLVA…LSAI. Catalysis depends on aspartate 319, which acts as the 4-aspartylphosphate intermediate. ATP-binding positions include aspartate 356, glutamate 360, 388 to 395, and lysine 407; that span reads FKAETRMS. Residues aspartate 530 and aspartate 534 each contribute to the Mg(2+) site. Helical transmembrane passes span 600 to 620, 628 to 648, and 672 to 692; these read FAII…LNIM, AILS…PLAM, and GGVI…GLFI.

Belongs to the cation transport ATPase (P-type) (TC 3.A.3) family. Type IA subfamily. As to quaternary structure, the system is composed of three essential subunits: KdpA, KdpB and KdpC.

The protein localises to the cell membrane. The catalysed reaction is K(+)(out) + ATP + H2O = K(+)(in) + ADP + phosphate + H(+). Functionally, part of the high-affinity ATP-driven potassium transport (or Kdp) system, which catalyzes the hydrolysis of ATP coupled with the electrogenic transport of potassium into the cytoplasm. This subunit is responsible for energy coupling to the transport system and for the release of the potassium ions to the cytoplasm. In Bacillus thuringiensis (strain Al Hakam), this protein is Potassium-transporting ATPase ATP-binding subunit.